Here is a 570-residue protein sequence, read N- to C-terminus: Putative ABC transporter ATP-binding protein SACOL2708 (570 aa).

2 ABC transporter domains span residues 6–247 and 304–537; these read ISFK…GIRE and LELN…ASLR. ATP-binding positions include 40-47 and 338-345; these read GASGSGKS and GHNGAGKS.

It belongs to the ABC transporter superfamily.

It localises to the cell membrane. Its function is as follows. Probably part of an ABC transporter complex. Responsible for energy coupling to the transport system. This Staphylococcus aureus (strain COL) protein is Putative ABC transporter ATP-binding protein SACOL2708.